The primary structure comprises 215 residues: Probable transaldolase 1 (215 aa).

Lysine 83 serves as the catalytic Schiff-base intermediate with substrate.

This sequence belongs to the transaldolase family. Type 3B subfamily.

The protein localises to the cytoplasm. The enzyme catalyses D-sedoheptulose 7-phosphate + D-glyceraldehyde 3-phosphate = D-erythrose 4-phosphate + beta-D-fructose 6-phosphate. It participates in carbohydrate degradation; pentose phosphate pathway; D-glyceraldehyde 3-phosphate and beta-D-fructose 6-phosphate from D-ribose 5-phosphate and D-xylulose 5-phosphate (non-oxidative stage): step 2/3. Functionally, transaldolase is important for the balance of metabolites in the pentose-phosphate pathway. This Bacillus cereus (strain ATCC 14579 / DSM 31 / CCUG 7414 / JCM 2152 / NBRC 15305 / NCIMB 9373 / NCTC 2599 / NRRL B-3711) protein is Probable transaldolase 1.